A 294-amino-acid polypeptide reads, in one-letter code: Beta-glucoside kinase (294 aa).

5–11 (AFDIGGT) provides a ligand contact to ATP.

Belongs to the ROK (NagC/XylR) family.

The enzyme catalyses D-cellobiose + ATP = 6-phospho-beta-D-glucosyl-(1-&gt;4)-D-glucose + ADP + H(+). Catalyzes the ATP-dependent phosphorylation of cellobiose to produce cellobiose-6'-P. May have a dual role of kinase and transcriptional regulator of the cellobiose-PTS operon. This chain is Beta-glucoside kinase (bglK), found in Listeria innocua serovar 6a (strain ATCC BAA-680 / CLIP 11262).